Consider the following 576-residue polypeptide: Trehalase (576 aa).

Positions 1–20 (MTWELHLLLLLGLGLRSQEA) are cleaved as a signal peptide. An N-linked (GlcNAc...) asparagine glycan is attached at Asn75. Substrate is bound by residues Arg165, 172–173 (WD), Asn209, and 218–220 (RSQ). Asn258 carries an N-linked (GlcNAc...) asparagine glycan. Substrate contacts are provided by residues 283–285 (RPE) and Gly316. Asp318 serves as the catalytic Proton donor/acceptor. N-linked (GlcNAc...) asparagine glycosylation is present at Asn366. Catalysis depends on Glu511, which acts as the Proton donor/acceptor. Glu526 serves as a coordination point for substrate. Residue Ser553 is the site of GPI-anchor amidated serine attachment. A propeptide spans 554-576 (GTQLASLGPHCLVAALLLSLLLQ) (removed in mature form).

Belongs to the glycosyl hydrolase 37 family. In terms of assembly, homodimer; disulfide-linked.

It localises to the cell membrane. It carries out the reaction alpha,alpha-trehalose + H2O = alpha-D-glucose + beta-D-glucose. In terms of biological role, intestinal trehalase is probably involved in the hydrolysis of ingested trehalose. This chain is Trehalase, found in Mus musculus (Mouse).